A 226-amino-acid polypeptide reads, in one-letter code: Thiamine-phosphate synthase (226 aa).

4-amino-2-methyl-5-(diphosphooxymethyl)pyrimidine is bound by residues 46 to 50 (QLRDK) and N87. Mg(2+) contacts are provided by D88 and D107. S126 is a 4-amino-2-methyl-5-(diphosphooxymethyl)pyrimidine binding site. Residue 152 to 154 (TPT) participates in 2-[(2R,5Z)-2-carboxy-4-methylthiazol-5(2H)-ylidene]ethyl phosphate binding. K155 contacts 4-amino-2-methyl-5-(diphosphooxymethyl)pyrimidine. G183 is a 2-[(2R,5Z)-2-carboxy-4-methylthiazol-5(2H)-ylidene]ethyl phosphate binding site.

This sequence belongs to the thiamine-phosphate synthase family. It depends on Mg(2+) as a cofactor.

The catalysed reaction is 2-[(2R,5Z)-2-carboxy-4-methylthiazol-5(2H)-ylidene]ethyl phosphate + 4-amino-2-methyl-5-(diphosphooxymethyl)pyrimidine + 2 H(+) = thiamine phosphate + CO2 + diphosphate. It carries out the reaction 2-(2-carboxy-4-methylthiazol-5-yl)ethyl phosphate + 4-amino-2-methyl-5-(diphosphooxymethyl)pyrimidine + 2 H(+) = thiamine phosphate + CO2 + diphosphate. It catalyses the reaction 4-methyl-5-(2-phosphooxyethyl)-thiazole + 4-amino-2-methyl-5-(diphosphooxymethyl)pyrimidine + H(+) = thiamine phosphate + diphosphate. Its pathway is cofactor biosynthesis; thiamine diphosphate biosynthesis; thiamine phosphate from 4-amino-2-methyl-5-diphosphomethylpyrimidine and 4-methyl-5-(2-phosphoethyl)-thiazole: step 1/1. In terms of biological role, condenses 4-methyl-5-(beta-hydroxyethyl)thiazole monophosphate (THZ-P) and 2-methyl-4-amino-5-hydroxymethyl pyrimidine pyrophosphate (HMP-PP) to form thiamine monophosphate (TMP). This Mycobacterium sp. (strain KMS) protein is Thiamine-phosphate synthase.